The chain runs to 433 residues: Type I acyl-CoA thioesterase mpaH' (433 aa).

An abhydrolase domain region spans residues 58 to 246; it reads HGVGLPKELY…IKALFGTTAD (189 aa). Valine 60 serves as a coordination point for substrate. The active-site Nucleophile is the serine 139. Residue phenylalanine 140 coordinates substrate. Active-site residues include aspartate 163 and histidine 365.

It belongs to the AB hydrolase superfamily. MpaH hydrolase family. Homodimer.

It localises to the peroxisome matrix. The catalysed reaction is mycophenolyl-CoA + H2O = mycophenolate + CoA + H(+). It functions in the pathway secondary metabolite biosynthesis; terpenoid biosynthesis. Its function is as follows. Type I acyl-CoA thioesterase; part of the gene cluster that mediates the biosynthesis of mycophenolic acid (MPA), the first isolated antibiotic natural product in the world obtained from a culture of Penicillium brevicompactum in 1893. MpaH' acts as a peroxisomal acyl-CoA hydrolase that converts MPA-CoA into the final product MPA. The first step of the pathway is the synthesis of 5-methylorsellinic acid (5MOA) by the cytosolic polyketide synthase mpaC. 5MOA is then converted to the phthalide compound 5,7-dihydroxy-4,6-dimethylphthalide (DHMP) by the endoplasmic reticulum-bound cytochrome P450 monooxygenase mpaDE. MpaDE first catalyzes hydroxylation of 5-MOA to 4,6-dihydroxy-2-(hydroxymethyl)-3-methylbenzoic acid (DHMB). MpaDE then acts as a lactone synthase that catalyzes the ring closure to convert DHMB into DHMP. The next step is the prenylation of DHMP by the Golgi apparatus-associated prenyltransferase mpaA to yield farnesyl-DHMP (FDHMP). The ER-bound oxygenase mpaB then mediates the oxidative cleavage the C19-C20 double bond in FDHMP to yield FDHMP-3C via a mycophenolic aldehyde intermediate. The O-methyltransferase mpaG catalyzes the methylation of FDHMP-3C to yield MFDHMP-3C. After the cytosolic methylation of FDHMP-3C, MFDHMP-3C enters into peroxisomes probably via free diffusion due to its low molecular weight. Upon a peroxisomal CoA ligation reaction, catalyzed by a beta-oxidation component enzyme acyl-CoA ligase ACL891, MFDHMP-3C-CoA would then be restricted to peroxisomes for the following beta-oxidation pathway steps. The peroxisomal beta-oxidation machinery than converts MFDHMP-3C-CoA into MPA_CoA, via a beta-oxidation chain-shortening process. Finally mpaH acts as a peroxisomal acyl-CoA hydrolase with high substrate specificity toward MPA-CoA to release the final product MPA. This chain is Type I acyl-CoA thioesterase mpaH', found in Penicillium brevicompactum.